Consider the following 239-residue polypeptide: Ribonuclease PH (239 aa).

Residues arginine 86 and 124–126 (GTR) each bind phosphate.

This sequence belongs to the RNase PH family. In terms of assembly, homohexameric ring arranged as a trimer of dimers.

The catalysed reaction is tRNA(n+1) + phosphate = tRNA(n) + a ribonucleoside 5'-diphosphate. Its function is as follows. Phosphorolytic 3'-5' exoribonuclease that plays an important role in tRNA 3'-end maturation. Removes nucleotide residues following the 3'-CCA terminus of tRNAs; can also add nucleotides to the ends of RNA molecules by using nucleoside diphosphates as substrates, but this may not be physiologically important. Probably plays a role in initiation of 16S rRNA degradation (leading to ribosome degradation) during starvation. The sequence is that of Ribonuclease PH from Rhizobium johnstonii (strain DSM 114642 / LMG 32736 / 3841) (Rhizobium leguminosarum bv. viciae).